The sequence spans 176 residues: Nucleoside triphosphate/diphosphate phosphatase (176 aa).

Residue Arg23 is the Proton donor of the active site. Residues Asn87, Asp103, Asp105, Asp107, Asp120, and Glu123 each contribute to the Mg(2+) site.

This sequence belongs to the Ntdp family. The cofactor is Mg(2+).

It carries out the reaction a ribonucleoside 5'-triphosphate + H2O = a ribonucleoside 5'-diphosphate + phosphate + H(+). The enzyme catalyses a ribonucleoside 5'-diphosphate + H2O = a ribonucleoside 5'-phosphate + phosphate + H(+). Has nucleoside phosphatase activity towards nucleoside triphosphates and nucleoside diphosphates. This Bacillus cereus (strain B4264) protein is Nucleoside triphosphate/diphosphate phosphatase.